The chain runs to 458 residues: Monomethylamine methyltransferase MtmB2 (458 aa).

A non-standard amino acid (pyrrolysine) is located at residue pyrrolysine 202.

This sequence belongs to the monomethylamine methyltransferase family. Can form a complex with MtmC.

The enzyme catalyses Co(I)-[methylamine-specific corrinoid protein] + methylamine + H(+) = methyl-Co(III)-[methylamine-specific corrinoid protein] + NH4(+). Its pathway is one-carbon metabolism; methanogenesis from methylamine. Catalyzes the transfer of the methyl group from monomethylamine to the corrinoid cofactor of MtmC. In Methanosarcina acetivorans (strain ATCC 35395 / DSM 2834 / JCM 12185 / C2A), this protein is Monomethylamine methyltransferase MtmB2 (mtmB2).